The primary structure comprises 780 residues: Aconitate hydratase, mitochondrial (780 aa).

The transit peptide at 1–27 (MAPYSLLVTRLQKALGVRQYHVASVLC) directs the protein to the mitochondrion. K31 is subject to N6-succinyllysine. K50 carries the N6-acetyllysine; alternate modification. K50 bears the N6-succinyllysine; alternate mark. Position 99 (Q99) interacts with substrate. N6-acetyllysine; alternate occurs at positions 138 and 144. Residues K138 and K144 each carry the N6-succinyllysine; alternate modification. 192–194 (DSH) is a substrate binding site. K233 carries the N6-acetyllysine; alternate modification. K233 is subject to N6-succinyllysine; alternate. Residue C385 participates in [4Fe-4S] cluster binding. K411 carries the N6-succinyllysine modification. Positions 448 and 451 each coordinate [4Fe-4S] cluster. Residues R474 and R479 each coordinate substrate. The segment covering 528–537 (DADELPKGEF) has biased composition (basic and acidic residues). Residues 528–560 (DADELPKGEFDPGQDTYQHPPKDSSGQHVDVSP) are disordered. At K549 the chain carries N6-succinyllysine. The span at 551–560 (SSGQHVDVSP) shows a compositional bias: polar residues. S559 is modified (phosphoserine). At K573 the chain carries N6-acetyllysine; alternate. The residue at position 573 (K573) is an N6-succinyllysine; alternate. 2 positions are modified to N6-succinyllysine: K577 and K591. K605 bears the N6-acetyllysine; alternate mark. K605 bears the N6-succinyllysine; alternate mark. R607 contributes to the substrate binding site. K628 is modified (N6-succinyllysine). At S670 the chain carries Phosphoserine. Residue 670 to 671 (SR) coordinates substrate. K689 is subject to N6-succinyllysine. 2 positions are modified to N6-acetyllysine; alternate: K723 and K730. An N6-succinyllysine; alternate mark is found at K723 and K730. Residues K736, K739, and K743 each carry the N6-acetyllysine modification.

Belongs to the aconitase/IPM isomerase family. In terms of assembly, monomer. [4Fe-4S] cluster serves as cofactor. Forms covalent cross-links mediated by transglutaminase TGM2, between a glutamine and the epsilon-amino group of a lysine residue, forming homopolymers and heteropolymers.

The protein resides in the mitochondrion. It catalyses the reaction citrate = D-threo-isocitrate. It functions in the pathway carbohydrate metabolism; tricarboxylic acid cycle; isocitrate from oxaloacetate: step 2/2. Its function is as follows. Catalyzes the isomerization of citrate to isocitrate via cis-aconitate. This is Aconitate hydratase, mitochondrial (ACO2) from Homo sapiens (Human).